A 500-amino-acid polypeptide reads, in one-letter code: Probable cytosol aminopeptidase (500 aa).

Residues lysine 264 and aspartate 269 each contribute to the Mn(2+) site. Residue lysine 276 is part of the active site. Mn(2+) contacts are provided by aspartate 287, aspartate 346, and glutamate 348. Arginine 350 is a catalytic residue.

It belongs to the peptidase M17 family. The cofactor is Mn(2+).

It is found in the cytoplasm. The catalysed reaction is Release of an N-terminal amino acid, Xaa-|-Yaa-, in which Xaa is preferably Leu, but may be other amino acids including Pro although not Arg or Lys, and Yaa may be Pro. Amino acid amides and methyl esters are also readily hydrolyzed, but rates on arylamides are exceedingly low.. It catalyses the reaction Release of an N-terminal amino acid, preferentially leucine, but not glutamic or aspartic acids.. Presumably involved in the processing and regular turnover of intracellular proteins. Catalyzes the removal of unsubstituted N-terminal amino acids from various peptides. This chain is Probable cytosol aminopeptidase, found in Chlamydia felis (strain Fe/C-56) (Chlamydophila felis).